A 288-amino-acid polypeptide reads, in one-letter code: Pteridine reductase 1 (288 aa).

17–40 (RLGRSIAEGLHAEGYAVCLHYHRS) is an NADP(+) binding site. S175 contributes to the substrate binding site. Y194 functions as the Proton acceptor in the catalytic mechanism.

It belongs to the short-chain dehydrogenases/reductases (SDR) family. As to quaternary structure, homotetramer.

The enzyme catalyses (6R)-L-erythro-5,6,7,8-tetrahydrobiopterin + 2 NADP(+) = L-erythro-biopterin + 2 NADPH + 2 H(+). It participates in cofactor biosynthesis; tetrahydrobiopterin biosynthesis; tetrahydrobiopterin from biopterin: step 1/1. Functionally, exhibits a NADPH-dependent biopterin reductase activity. Has good activity with folate and significant activity with dihydrofolate and dihydrobiopterin, but not with quinonoid dihydrobiopterin. Confers resistance to methotrexate (MTX). This chain is Pteridine reductase 1 (PTR1), found in Leishmania major.